Reading from the N-terminus, the 230-residue chain is Transmembrane protein 221 (230 aa).

The next 4 helical transmembrane spans lie at Ala12–Phe32, Ala73–Gly93, Leu125–Phe145, and Ile147–Ile167. Positions Arg184–Phe230 are disordered. Positions Glu194–Ser204 are enriched in basic and acidic residues.

Its subcellular location is the membrane. This Mus musculus (Mouse) protein is Transmembrane protein 221 (Tmem221).